Reading from the N-terminus, the 349-residue chain is S-adenosylmethionine decarboxylase proenzyme 3 (349 aa).

Catalysis depends on residues glutamate 9 and glutamate 12. Glutamate 68 lines the substrate pocket. Residue serine 69 is the Schiff-base intermediate with substrate; via pyruvic acid of the active site. Serine 69 bears the Pyruvic acid (Ser); by autocatalysis mark. The Proton donor; for catalytic activity role is filled by cysteine 83. Residues serine 235 and histidine 248 each act as proton acceptor; for processing activity in the active site. Glutamate 252 is a binding site for substrate.

The protein belongs to the eukaryotic AdoMetDC family. Pyruvate serves as cofactor. Post-translationally, is synthesized initially as an inactive proenzyme. Formation of the active enzyme involves a self-maturation process in which the active site pyruvoyl group is generated from an internal serine residue via an autocatalytic post-translational modification. Two non-identical subunits are generated from the proenzyme in this reaction, and the pyruvate is formed at the N-terminus of the alpha chain, which is derived from the carboxyl end of the proenzyme. The post-translation cleavage follows an unusual pathway, termed non-hydrolytic serinolysis, in which the side chain hydroxyl group of the serine supplies its oxygen atom to form the C-terminus of the beta chain, while the remainder of the serine residue undergoes an oxidative deamination to produce ammonia and the pyruvoyl group blocking the N-terminus of the alpha chain.

The enzyme catalyses S-adenosyl-L-methionine + H(+) = S-adenosyl 3-(methylsulfanyl)propylamine + CO2. The protein operates within amine and polyamine biosynthesis; S-adenosylmethioninamine biosynthesis; S-adenosylmethioninamine from S-adenosyl-L-methionine: step 1/1. Its function is as follows. Essential for biosynthesis of the polyamines spermidine and spermine. Essential for polyamine homeostasis, and normal plant embryogenesis, growth and development. This chain is S-adenosylmethionine decarboxylase proenzyme 3, found in Arabidopsis thaliana (Mouse-ear cress).